A 278-amino-acid chain; its full sequence is Msm operon regulatory protein (278 aa).

Residues Asn-176–Glu-274 enclose the HTH araC/xylS-type domain. 2 DNA-binding regions (H-T-H motif) span residues Asn-193–Thr-214 and Ile-241–Phe-264.

Regulatory protein for the msm operon for multiple sugar metabolism. Activates the transcription of the msmEFGK, aga, dexB and gftA genes. The protein is Msm operon regulatory protein (msmR) of Streptococcus mutans serotype c (strain ATCC 700610 / UA159).